The chain runs to 215 residues: MPLAPPPEKMMFQLSLRRRGISDQAVLRAMDAVPRDLFVTPDLRDEAWRDTALPIACGQTISQPFVVAYMTEQLQLKPEHRVLEIGTGSGYQAAVLSRLCQQVLTLERFKTLADSARARLESLECHNVEVQLGDGFDVPAKAGLFDRILVTAAMEEVPGALIARLDLDGILIAPVGPHQATQTLVRIRNAKGGIERKELVAVRFVPALPGIAREL.

Residue Ser-62 is part of the active site.

It belongs to the methyltransferase superfamily. L-isoaspartyl/D-aspartyl protein methyltransferase family.

It localises to the cytoplasm. It catalyses the reaction [protein]-L-isoaspartate + S-adenosyl-L-methionine = [protein]-L-isoaspartate alpha-methyl ester + S-adenosyl-L-homocysteine. Functionally, catalyzes the methyl esterification of L-isoaspartyl residues in peptides and proteins that result from spontaneous decomposition of normal L-aspartyl and L-asparaginyl residues. It plays a role in the repair and/or degradation of damaged proteins. The sequence is that of Protein-L-isoaspartate O-methyltransferase from Rhodopseudomonas palustris (strain BisA53).